A 75-amino-acid chain; its full sequence is Small ribosomal subunit protein bS18 (75 aa).

Belongs to the bacterial ribosomal protein bS18 family. As to quaternary structure, part of the 30S ribosomal subunit. Forms a tight heterodimer with protein bS6.

Its function is as follows. Binds as a heterodimer with protein bS6 to the central domain of the 16S rRNA, where it helps stabilize the platform of the 30S subunit. In Colwellia psychrerythraea (strain 34H / ATCC BAA-681) (Vibrio psychroerythus), this protein is Small ribosomal subunit protein bS18.